Here is a 650-residue protein sequence, read N- to C-terminus: Kinesin-like protein KIF22-B (650 aa).

A Kinesin motor domain is found at 31-359; it reads RVRVAVRLRP…LNFAAKSKQI (329 aa). 116–123 is a binding site for ATP; the sequence is GPTGAGKT. The segment at 365-416 is disordered; sequence SRETTQTVAQPAMKRPREEAEATTSSRQRKKSKTDSTESSPNSSMESTGKRK. The segment covering 401 to 411 has biased composition (low complexity); sequence TESSPNSSMES. Residues 452-498 adopt a coiled-coil conformation; sequence KRERMALLKKWEESQMEIERLKEKQKELEQKAMEAEARLEKSNNSDL. An Important for regulated proteolytic degradation motif is present at residues 560-563; that stretch reads GHEN.

Belongs to the TRAFAC class myosin-kinesin ATPase superfamily. Kinesin family. Post-translationally, ubiquitinated, leading to its subsequent proteasomal degradation.

It localises to the nucleus. The protein localises to the cytoplasm. The protein resides in the cytoskeleton. In terms of biological role, kinesin family member that is involved in spindle formation and the movements of chromosomes during mitosis and meiosis. Binds to microtubules and to DNA. This chain is Kinesin-like protein KIF22-B (kif22-b), found in Xenopus laevis (African clawed frog).